A 177-amino-acid polypeptide reads, in one-letter code: MADFQEQLRQYRAQKRRKETVDNFKDKLRRFWMLGTGANKDTTIEVQQVPTKFEAISENSQDEAVTSSESELVPEEQPTRSTDHHHKENNCLKYTLWTVYLLFWITLYVIAIKLSFGLVFLMFSALFGIYFNTRTEPKKRNEMSAYSVFNKNCESIDGTLKAEQFEREIRYGSGSVR.

At 1–100 (MADFQEQLRQ…CLKYTLWTVY (100 aa)) the chain is on the cytoplasmic side. The span at 57-70 (SENSQDEAVTSSES) shows a compositional bias: polar residues. The segment at 57–85 (SENSQDEAVTSSESELVPEEQPTRSTDHH) is disordered. An intramembrane region (helical) is located at residues 101 to 121 (LLFWITLYVIAIKLSFGLVFL). At 122 to 177 (MFSALFGIYFNTRTEPKKRNEMSAYSVFNKNCESIDGTLKAEQFEREIRYGSGSVR) the chain is on the cytoplasmic side.

This sequence belongs to the SAYSD1 family.

The protein localises to the endoplasmic reticulum membrane. In terms of biological role, ufmylation 'reader' component of a translocation-associated quality control pathway, a mechanism that takes place when a ribosome has stalled during translation, and which is required to degrade clogged substrates. Specifically recognizes and binds ufmylated ribosomes when a ribosome has stalled, promoting the transport of stalled nascent chain to lysosomes for degradation. In Drosophila melanogaster (Fruit fly), this protein is SAYSvFN domain-containing protein 1.